A 239-amino-acid chain; its full sequence is Ribosomal RNA small subunit methyltransferase G (239 aa).

S-adenosyl-L-methionine is bound by residues Gly78, Phe83, Ala129–Glu130, and Arg148.

The protein belongs to the methyltransferase superfamily. RNA methyltransferase RsmG family.

Its subcellular location is the cytoplasm. In terms of biological role, specifically methylates the N7 position of a guanine in 16S rRNA. This Clostridium perfringens (strain SM101 / Type A) protein is Ribosomal RNA small subunit methyltransferase G.